Consider the following 386-residue polypeptide: S-adenosylmethionine synthase (386 aa).

ATP is bound at residue His-16. Position 18 (Asp-18) interacts with Mg(2+). Residue Glu-44 coordinates K(+). Residues Glu-57 and Gln-100 each contribute to the L-methionine site. Residues 100-110 (QSGDIAMGVDE) are flexible loop. ATP contacts are provided by residues 165-167 (DAK), Asp-240, 246-247 (RK), Ala-263, and Lys-267. Asp-240 is a binding site for L-methionine. Lys-271 provides a ligand contact to L-methionine.

It belongs to the AdoMet synthase family. In terms of assembly, homotetramer; dimer of dimers. Mg(2+) is required as a cofactor. K(+) serves as cofactor.

The protein resides in the cytoplasm. The catalysed reaction is L-methionine + ATP + H2O = S-adenosyl-L-methionine + phosphate + diphosphate. The protein operates within amino-acid biosynthesis; S-adenosyl-L-methionine biosynthesis; S-adenosyl-L-methionine from L-methionine: step 1/1. In terms of biological role, catalyzes the formation of S-adenosylmethionine (AdoMet) from methionine and ATP. The overall synthetic reaction is composed of two sequential steps, AdoMet formation and the subsequent tripolyphosphate hydrolysis which occurs prior to release of AdoMet from the enzyme. In Hahella chejuensis (strain KCTC 2396), this protein is S-adenosylmethionine synthase.